Here is a 138-residue protein sequence, read N- to C-terminus: DNA-directed RNA polymerase II subunit 4 (138 aa).

Serine 2 carries the post-translational modification N-acetylserine.

The protein belongs to the eukaryotic RPB4 RNA polymerase subunit family. As to quaternary structure, component of the RNA polymerase II complex consisting of at least 12 subunits. Interacts with NRPB7.

The protein localises to the nucleus. In terms of biological role, DNA-dependent RNA polymerase catalyzes the transcription of DNA into RNA using the four ribonucleoside triphosphates as substrates. Second largest component of RNA polymerase II which synthesizes mRNA precursors and many functional non-coding RNAs. Proposed to contribute to the polymerase catalytic activity and forms the polymerase active center together with the largest subunit. Pol II is the central component of the basal RNA polymerase II transcription machinery. It is composed of mobile elements that move relative to each other. The polypeptide is DNA-directed RNA polymerase II subunit 4 (NRPB4) (Arabidopsis thaliana (Mouse-ear cress)).